Consider the following 319-residue polypeptide: Acetyl esterase (319 aa).

Residues 91–93 (HGG) carry the Involved in the stabilization of the negatively charged intermediate by the formation of the oxyanion hole motif. Residues S165, D262, and H292 contribute to the active site.

It belongs to the 'GDXG' lipolytic enzyme family. As to quaternary structure, homodimer. Interacts with MalT and MelA.

The protein localises to the cytoplasm. Functionally, displays esterase activity towards short chain fatty esters (acyl chain length of up to 8 carbons). Able to hydrolyze triacetylglycerol (triacetin) and tributyrylglycerol (tributyrin), but not trioleylglycerol (triolein) or cholesterol oleate. Negatively regulates MalT activity by antagonizing maltotriose binding. Inhibits MelA galactosidase activity. The protein is Acetyl esterase of Escherichia coli O127:H6 (strain E2348/69 / EPEC).